The primary structure comprises 213 residues: Adenylate kinase (213 aa).

An ATP-binding site is contributed by 10-15 (GSGKGS). The segment at 30–60 (STGNLFRAILKEDSELARKIKEINVSGGKLV) is NMP. AMP contacts are provided by residues Thr31, Arg36, 58–60 (KLV), 87–90 (GYPR), and Gln94. The tract at residues 123–160 (GRWMCPKCAGIYNIHFKKPQVDGVCDNDQATLYQRADD) is LID. Arg124 serves as a coordination point for ATP. Residues Cys127 and Cys130 each contribute to the Zn(2+) site. 133–134 (IY) contacts ATP. Cys147 and Asp150 together coordinate Zn(2+). Positions 157 and 168 each coordinate AMP. Position 196 (Gln196) interacts with ATP.

Belongs to the adenylate kinase family. In terms of assembly, monomer.

The protein localises to the cytoplasm. The catalysed reaction is AMP + ATP = 2 ADP. The protein operates within purine metabolism; AMP biosynthesis via salvage pathway; AMP from ADP: step 1/1. In terms of biological role, catalyzes the reversible transfer of the terminal phosphate group between ATP and AMP. Plays an important role in cellular energy homeostasis and in adenine nucleotide metabolism. This chain is Adenylate kinase, found in Ureaplasma urealyticum serovar 10 (strain ATCC 33699 / Western).